Consider the following 106-residue polypeptide: MTSATQFDNVSVVKRANVYFDGKCVSHTVLFPDGTRKTLGVILPCALNFGTDAPELMEVQAGKCRVKLDGSDTWQTYGAGESISVPGKSRFDIEVIETLDYVCSYL.

This sequence belongs to the nucleoside phosphorylase PpnP family.

It carries out the reaction a purine D-ribonucleoside + phosphate = a purine nucleobase + alpha-D-ribose 1-phosphate. It catalyses the reaction adenosine + phosphate = alpha-D-ribose 1-phosphate + adenine. The catalysed reaction is cytidine + phosphate = cytosine + alpha-D-ribose 1-phosphate. The enzyme catalyses guanosine + phosphate = alpha-D-ribose 1-phosphate + guanine. It carries out the reaction inosine + phosphate = alpha-D-ribose 1-phosphate + hypoxanthine. It catalyses the reaction thymidine + phosphate = 2-deoxy-alpha-D-ribose 1-phosphate + thymine. The catalysed reaction is uridine + phosphate = alpha-D-ribose 1-phosphate + uracil. The enzyme catalyses xanthosine + phosphate = alpha-D-ribose 1-phosphate + xanthine. Catalyzes the phosphorolysis of diverse nucleosides, yielding D-ribose 1-phosphate and the respective free bases. Can use uridine, adenosine, guanosine, cytidine, thymidine, inosine and xanthosine as substrates. Also catalyzes the reverse reactions. This is Pyrimidine/purine nucleoside phosphorylase from Burkholderia multivorans (strain ATCC 17616 / 249).